The primary structure comprises 643 residues: Type VI secretion system spike protein VgrG1a (643 aa).

This sequence belongs to the VgrG protein family. Forms homotrimers. Part of the type VI secretion system (T6SS). Interacts with EagT6 and Tse6; these interactions are required for Tse6 loading onto VgrG1. Interacts with Hcp1.

The protein localises to the secreted. Part of the H1 type VI secretion system (H1-T6SS) specialized secretion system, which delivers several virulence factors in both prokaryotic and eukaryotic cells during infection. Forms the spike at the tip of the elongating tube formed by haemolysin co-regulated protein 1/Hcp1. Allows the delivery of the Tse6 toxin to target cells where it exerts its toxicity. The protein is Type VI secretion system spike protein VgrG1a of Pseudomonas aeruginosa (strain ATCC 15692 / DSM 22644 / CIP 104116 / JCM 14847 / LMG 12228 / 1C / PRS 101 / PAO1).